The sequence spans 525 residues: Tigger transposable element-derived protein 2 (525 aa).

An HTH psq-type domain is found at Met1–Ile52. DNA-binding regions (H-T-H motif) lie at residues Phe28 to Asn48 and Thr100 to Arg132. Residues Lys67–Ala139 form the HTH CENPB-type domain. In terms of domain architecture, DDE-1 spans Leu168–Trp385.

It belongs to the tigger transposable element derived protein family.

Its subcellular location is the nucleus. The sequence is that of Tigger transposable element-derived protein 2 (Tigd2) from Mus musculus (Mouse).